Consider the following 310-residue polypeptide: p-hydroxybenzoic acid efflux pump subunit AaeA (310 aa).

Residues 12 to 32 (AITVVLVILAFIAIFNAWVYY) traverse the membrane as a helical segment.

It belongs to the membrane fusion protein (MFP) (TC 8.A.1) family.

The protein localises to the cell inner membrane. Its function is as follows. Forms an efflux pump with AaeB. In Shigella flexneri, this protein is p-hydroxybenzoic acid efflux pump subunit AaeA.